The following is a 508-amino-acid chain: Protein MGF 505-9R (508 aa).

ANK repeat units follow at residues 54–83 (SINL…NLHY), 253–282 (QVDT…RKTV), and 313–343 (IIKK…KINL).

This sequence belongs to the asfivirus MGF 505 family.

Functionally, plays a role in virus cell tropism, and may be required for efficient virus replication in macrophages. The polypeptide is Protein MGF 505-9R (Ornithodoros (relapsing fever ticks)).